Here is a 636-residue protein sequence, read N- to C-terminus: 1-deoxy-D-xylulose-5-phosphate synthase (636 aa).

Thiamine diphosphate is bound by residues histidine 74 and 115-117 (GHA). Aspartate 146 is a binding site for Mg(2+). Thiamine diphosphate contacts are provided by residues 147–148 (GA), asparagine 175, tyrosine 285, and glutamate 368. Asparagine 175 contributes to the Mg(2+) binding site.

This sequence belongs to the transketolase family. DXPS subfamily. As to quaternary structure, homodimer. The cofactor is Mg(2+). Requires thiamine diphosphate as cofactor.

The enzyme catalyses D-glyceraldehyde 3-phosphate + pyruvate + H(+) = 1-deoxy-D-xylulose 5-phosphate + CO2. It participates in metabolic intermediate biosynthesis; 1-deoxy-D-xylulose 5-phosphate biosynthesis; 1-deoxy-D-xylulose 5-phosphate from D-glyceraldehyde 3-phosphate and pyruvate: step 1/1. Catalyzes the acyloin condensation reaction between C atoms 2 and 3 of pyruvate and glyceraldehyde 3-phosphate to yield 1-deoxy-D-xylulose-5-phosphate (DXP). The chain is 1-deoxy-D-xylulose-5-phosphate synthase from Anaeromyxobacter dehalogenans (strain 2CP-1 / ATCC BAA-258).